A 186-amino-acid chain; its full sequence is Ribosome-recycling factor (186 aa).

Residues 135-162 (DGMDGLKKAEKDGDIGQDESRAQSERVQ) form a disordered region.

This sequence belongs to the RRF family.

The protein localises to the cytoplasm. In terms of biological role, responsible for the release of ribosomes from messenger RNA at the termination of protein biosynthesis. May increase the efficiency of translation by recycling ribosomes from one round of translation to another. The protein is Ribosome-recycling factor of Sinorhizobium fredii (strain NBRC 101917 / NGR234).